A 294-amino-acid polypeptide reads, in one-letter code: Negative regulator of the PHO system (294 aa).

The region spanning 7–289 (FQQLEKLGEG…ARQSLEHPWF (283 aa)) is the Protein kinase domain. ATP contacts are provided by residues 13–21 (LGEGTYATV) and Lys-36. The active-site Proton acceptor is Asp-130.

Belongs to the protein kinase superfamily. CMGC Ser/Thr protein kinase family. CDC2/CDKX subfamily. As to quaternary structure, interacts with a number of cyclins.

The enzyme catalyses L-seryl-[protein] + ATP = O-phospho-L-seryl-[protein] + ADP + H(+). It catalyses the reaction L-threonyl-[protein] + ATP = O-phospho-L-threonyl-[protein] + ADP + H(+). In terms of biological role, when phosphate concentrations are high it phosphorylates the PHO4 transcription factor thus establishing repression. The polypeptide is Negative regulator of the PHO system (PHO85) (Yarrowia lipolytica (strain CLIB 122 / E 150) (Yeast)).